The following is a 110-amino-acid chain: Nucleoid-associated protein PERMA_0533 (110 aa).

It belongs to the YbaB/EbfC family. In terms of assembly, homodimer.

The protein localises to the cytoplasm. It is found in the nucleoid. Its function is as follows. Binds to DNA and alters its conformation. May be involved in regulation of gene expression, nucleoid organization and DNA protection. In Persephonella marina (strain DSM 14350 / EX-H1), this protein is Nucleoid-associated protein PERMA_0533.